The following is a 2512-amino-acid chain: MHRVRLSRSQRNLYNGVRQDNNPALYLIGKSYRFRRLELARFLAALHATVLDNPVQLCVLENSGADYPDLVPRLRFGDIVRVGSADEHLQSTWCSGILGKPLVRHTVHTDPNGYVTGLDVHTHHILLDGGATGTIEADLARYLTTDPAGETPSVGAGLAKLREAHRRETAKVEESRGRLSAVVQRELADEAYHGGHGHSVSDAPGTAAKGVLHESATICGNAFDAILTLSEAQRVPLNVLVAAAAVAVDASLRQNTETLLVHTVDNRFGDSDLNVATCLVNSVAQTVRFPPFASVSDVVRTLDRGYVKAVRRRWLREEHYRRMYLAINRTSHVEALTLNFIREPCAPGLRPFLSEVPIATDIGPVEGMTVASVLDEEQRTLNLAIWNRADLPACKTHPKVAERIAAALESMAAMWDRPIAMIVNDWFGIGPDGTRCQGDWPARQPSTPAWFLDSARGVHQFLGRRRFVYPWVAWLVQRGAAPGDVLVFTDDDTDKTIDLLIACHLAGCGYSVCDTADEISVRTNAITEHGDGILVTVVDVAATQLAVVGHDELRKVVDERVTQVTHDALLATKTAYIMPTSGTTGQPKLVRISHGSLAVFCDAISRAYGWGAHDTVLQCAPLTSDISVEEIFGGAACGARLVRSAAMKTGDLAALVDDLVARETTIVDLPTAVWQLLCADGDAIDAIGRSRLRQIVIGGEAIRCSAVDKWLESAASQGISLLSSYGPTEATVVATFLPIVCDQTTMDGALLRLGRPILPNTVFLAFGEVVIVGDLVADGYLGIDGDGFGTVTAADGSRRRAFATGDRVTVDAEGFPVFSGRKDAVVKISGKRVDIAEVTRRIAEDPAVSDVAVELHSGSLGVWFKSQRTREGEQDAAAATRIRLVLVSLGVSSFFVVGVPNIPRKPNGKIDSDNLPRLPQWSAAGLNTAETGQRAAGLSQIWSRQLGRAIGPDSSLLGEGIGSLDLIRILPETRRYLGWRLSLLDLIGADTAANLADYAPTPDAPTGEDRFRPLVAAQRPAAIPLSFAQRRLWFLDQLQRPAPVYNMAVALRLRGYLDTEALGAAVADVVGRHESLRTVFPAVDGVPRQLVIEARRADLGCDIVDATAWPADRLQRAIEEAARHSFDLATEIPLRTWLFRIADDEHVLVAVAHHIAADGWSVAPLTADLSAAYASRCAGRAPDWAPLPVQYVDYTLWQREILGDLDDSDSPIAAQLAYWENALAGMPERLRLPTARPYPPVADQRGASLVVDWPASVQQQVRRIARQHNATSFMVVAAGLAVLLSKLSGSPDVAVGFPIAGRSDPALDNLVGFFVNTLVLRVNLAGDPSFAELLGQVRARSLAAYENQDVPFEVLVDRLKPTRALTHHPLIQVMLAWQDNPVGQLNLGDLQATPMPIDTRTARMDLVFSLAERFSEGSEPAGIGGAVEYRTDVFEAQAIDVLIERLRKVLVAVAAAPERTVSSIDALDGTERARLDEWGNRAVLTAPAPTPVSIPQMLAAQVARIPEAEAVCCGDASMTYRELDEASNRLAHRLAGCGAGPGECVALLFERCAPAVVAMVAVLKTGAAYLPIDPANPPPRVAFMLGDAVPVAAVTTAGLRSRLAGHDLPIIDVVDALAAYPGTPPPMPAAVNLAYILYTSGTTGEPKGVGITHRNVTRLFASLPARLSAAQVWSQCHSYGFDASAWEIWGALLGGGRLVIVPESVAASPNDFHGLLVAEHVSVLTQTPAAVAMLPTQGLESVALVVAGEACPAALVDRWAPGRVMLNAYGPTETTICAAISAPLRPGSGMPPIGVPVSGAALFVLDSWLRPVPAGVAGELYIAGAGVGVGYWRRAGLTASRFVACPFGGSGARMYRTGDLVCWRADGQLEFLGRTDDQVKIRGYRIELGEVATALAELAGVGQAVVIAREDRPGDKRLVGYATEIAPGAVDPAGLRAQLAQRLPGYLVPAAVVVIDALPLTVNGKLDHRALPAPEYGDTNGYRAPAGPVEKTVAGIFARVLGLERVGVDDSFFELGGDSLAAMRVIAAINTTLNADLPVRALLHASSTRGLSQLLGRDARPTSDPRLVSVHGDNPTEVHASDLTLDRFIDADTLATAVNLPGPSPELRTVLLTGATGFLGRYLVLELLRRLDVDGRLICLVRAESDEDARRRLEKTFDSGDPELLRHFKELAADRLEVVAGDKSEPDLGLDQPMWRRLAETVDLIVDSAAMVNAFPYHELFGPNVAGTAELIRIALTTKLKPFTYVSTADVGAAIEPSAFTEDADIRVISPTRTVDGGWAGGYGTSKWAGEVLLREANDLCALPVAVFRCGMILADTSYAGQLNMSDWVTRMVLSLMATGIAPRSFYEPDSEGNRQRAHFDGLPVTFVAEAIAVLGARVAGSSLAGFATYHVMNPHDDGIGLDEYVDWLIEAGYPIRRIDDFAEWLQRFEASLGALPDRQRRHSVLPMLLASNSQRLQPLKPTRGCSAPTDRFRAAVRAAKVGSDKDNPDIPHVSAPTIINYVTNLQLLGLL.

2 consecutive Carrier domains span residues 935–1003 and 1984–2059; these read AAGL…PTPD and APAG…GRDA. O-(pantetheine 4'-phosphoryl)serine occurs at positions 963 and 2019. One can recognise a Thioester reductase (TE) domain in the interval 2112–2372; the sequence is LTGATGFLGR…LPVTFVAEAI (261 aa).

This sequence belongs to the ATP-dependent AMP-binding enzyme family. Pantetheine 4'-phosphate is required as a cofactor.

The enzyme catalyses 2 a (3R)-3-isocyanyl-fatty acyl-[ACP] + L-lysine + ATP + 2 NADPH = an isonitrile lipopeptide + 2 holo-[ACP] + AMP + diphosphate + 2 NADP(+). In terms of biological role, nonribosomal peptide synthetase (NRPS) involved in the biosynthesis of a unique class of isonitrile lipopeptides (INLPs) that seem to function as virulence factors in M.tuberculosis and to play a role in metal acquisition. Catalyzes the final step in the pathway, i.e. the condensation of a (3R)-3-isocyanyl-fatty acyl-[ACP] to both amino groups of a lysine, producing isonitrile lipopeptides. In Mycobacterium tuberculosis (strain ATCC 25618 / H37Rv), this protein is Isonitrile lipopeptide synthase.